The sequence spans 480 residues: Aspartyl/glutamyl-tRNA(Asn/Gln) amidotransferase subunit B (480 aa).

Belongs to the GatB/GatE family. GatB subfamily. In terms of assembly, heterotrimer of A, B and C subunits.

The enzyme catalyses L-glutamyl-tRNA(Gln) + L-glutamine + ATP + H2O = L-glutaminyl-tRNA(Gln) + L-glutamate + ADP + phosphate + H(+). It carries out the reaction L-aspartyl-tRNA(Asn) + L-glutamine + ATP + H2O = L-asparaginyl-tRNA(Asn) + L-glutamate + ADP + phosphate + 2 H(+). In terms of biological role, allows the formation of correctly charged Asn-tRNA(Asn) or Gln-tRNA(Gln) through the transamidation of misacylated Asp-tRNA(Asn) or Glu-tRNA(Gln) in organisms which lack either or both of asparaginyl-tRNA or glutaminyl-tRNA synthetases. The reaction takes place in the presence of glutamine and ATP through an activated phospho-Asp-tRNA(Asn) or phospho-Glu-tRNA(Gln). The protein is Aspartyl/glutamyl-tRNA(Asn/Gln) amidotransferase subunit B of Streptococcus pneumoniae serotype 4 (strain ATCC BAA-334 / TIGR4).